Here is a 229-residue protein sequence, read N- to C-terminus: 5'-methylthioadenosine/S-adenosylhomocysteine nucleosidase (229 aa).

Glutamate 12 acts as the Proton acceptor in catalysis. Substrate-binding positions include glycine 78, methionine 152, and 173 to 174 (ME). The Proton donor role is filled by aspartate 197.

Belongs to the PNP/UDP phosphorylase family. MtnN subfamily.

The catalysed reaction is S-adenosyl-L-homocysteine + H2O = S-(5-deoxy-D-ribos-5-yl)-L-homocysteine + adenine. It carries out the reaction S-methyl-5'-thioadenosine + H2O = 5-(methylsulfanyl)-D-ribose + adenine. It catalyses the reaction 5'-deoxyadenosine + H2O = 5-deoxy-D-ribose + adenine. The protein operates within amino-acid biosynthesis; L-methionine biosynthesis via salvage pathway; S-methyl-5-thio-alpha-D-ribose 1-phosphate from S-methyl-5'-thioadenosine (hydrolase route): step 1/2. Functionally, catalyzes the irreversible cleavage of the glycosidic bond in both 5'-methylthioadenosine (MTA) and S-adenosylhomocysteine (SAH/AdoHcy) to adenine and the corresponding thioribose, 5'-methylthioribose and S-ribosylhomocysteine, respectively. Also cleaves 5'-deoxyadenosine, a toxic by-product of radical S-adenosylmethionine (SAM) enzymes, into 5-deoxyribose and adenine. The protein is 5'-methylthioadenosine/S-adenosylhomocysteine nucleosidase of Oceanobacillus iheyensis (strain DSM 14371 / CIP 107618 / JCM 11309 / KCTC 3954 / HTE831).